The sequence spans 142 residues: Ribosome-binding factor A (142 aa).

A disordered region spans residues 120–142 (TLGEVQSESDQPTTYETTTVNKT). A compositionally biased stretch (polar residues) spans 123 to 142 (EVQSESDQPTTYETTTVNKT).

Belongs to the RbfA family. Monomer. Binds 30S ribosomal subunits, but not 50S ribosomal subunits or 70S ribosomes.

The protein localises to the cytoplasm. In terms of biological role, one of several proteins that assist in the late maturation steps of the functional core of the 30S ribosomal subunit. Associates with free 30S ribosomal subunits (but not with 30S subunits that are part of 70S ribosomes or polysomes). Required for efficient processing of 16S rRNA. May interact with the 5'-terminal helix region of 16S rRNA. The polypeptide is Ribosome-binding factor A (Prochlorococcus marinus (strain MIT 9313)).